The chain runs to 340 residues: NADH-quinone oxidoreductase subunit H (340 aa).

8 helical membrane passes run 4–24, 78–98, 113–133, 151–171, 184–204, 244–264, 273–293, and 316–336; these read TIGI…PLLL, YLFV…WAVI, VLYL…AGWA, VSYE…AGSM, MLHW…IAGI, SMIL…LSPF, IFFV…FLFV, and VLIP…VAHV.

It belongs to the complex I subunit 1 family. As to quaternary structure, NDH-1 is composed of 14 different subunits. Subunits NuoA, H, J, K, L, M, N constitute the membrane sector of the complex.

It localises to the cell inner membrane. It carries out the reaction a quinone + NADH + 5 H(+)(in) = a quinol + NAD(+) + 4 H(+)(out). Functionally, NDH-1 shuttles electrons from NADH, via FMN and iron-sulfur (Fe-S) centers, to quinones in the respiratory chain. The immediate electron acceptor for the enzyme in this species is believed to be ubiquinone. Couples the redox reaction to proton translocation (for every two electrons transferred, four hydrogen ions are translocated across the cytoplasmic membrane), and thus conserves the redox energy in a proton gradient. This subunit may bind ubiquinone. The sequence is that of NADH-quinone oxidoreductase subunit H from Legionella pneumophila (strain Paris).